The following is a 95-amino-acid chain: Aspartyl/glutamyl-tRNA(Asn/Gln) amidotransferase subunit C (95 aa).

Belongs to the GatC family. Heterotrimer of A, B and C subunits.

It carries out the reaction L-glutamyl-tRNA(Gln) + L-glutamine + ATP + H2O = L-glutaminyl-tRNA(Gln) + L-glutamate + ADP + phosphate + H(+). The enzyme catalyses L-aspartyl-tRNA(Asn) + L-glutamine + ATP + H2O = L-asparaginyl-tRNA(Asn) + L-glutamate + ADP + phosphate + 2 H(+). In terms of biological role, allows the formation of correctly charged Asn-tRNA(Asn) or Gln-tRNA(Gln) through the transamidation of misacylated Asp-tRNA(Asn) or Glu-tRNA(Gln) in organisms which lack either or both of asparaginyl-tRNA or glutaminyl-tRNA synthetases. The reaction takes place in the presence of glutamine and ATP through an activated phospho-Asp-tRNA(Asn) or phospho-Glu-tRNA(Gln). This chain is Aspartyl/glutamyl-tRNA(Asn/Gln) amidotransferase subunit C, found in Chlorobium phaeobacteroides (strain DSM 266 / SMG 266 / 2430).